The primary structure comprises 217 residues: MOB kinase activator 3A (217 aa).

Cys-83, Cys-88, His-165, and His-170 together coordinate Zn(2+).

This sequence belongs to the MOB1/phocein family.

May regulate the activity of kinases. The polypeptide is MOB kinase activator 3A (MOB3A) (Pongo abelii (Sumatran orangutan)).